The following is a 464-amino-acid chain: Synaptosomal-associated protein 47 (464 aa).

Residues 20–42 are disordered; that stretch reads GRLWDSSGVPQRQKRPGPWRTQT. 2 t-SNARE coiled-coil homology domains span residues 154–216 and 401–463; these read VADA…LTEL and TSLP…MKRL.

This sequence belongs to the SVAP1 family. Forms a complex containing SNAP47, VAMP2 and STX1A. Associates with the BLOC-1 complex. Interacts with BLOC1S6.

The protein resides in the endomembrane system. It localises to the cytoplasm. The protein localises to the perinuclear region. In terms of biological role, plays a role in intracellular membrane fusion. In Homo sapiens (Human), this protein is Synaptosomal-associated protein 47 (SNAP47).